The following is a 281-amino-acid chain: MNIADGRQAFPAPAKLNLDLRITGRREDGYHNIESIFCLIDLQDTVYLKPRDDGKIILHNPVGGIPQEADLSYRAASLLQKYARNPAGVEIWLDKKIPTGAGLGGGSSDAATVLLVLNRWWQCSRTTQQLIDLGATLGADVPFFIFGKNAFASGIGEKLIGMDIPKQWYVIVKPPVHVSTAKIFTHEGLTRNSASSIMPTFQNLQPFRNDMQAVVFKEYPEVWKAYSELSRYGFALMTGSGACVFTACQDRDSAYNIYRQVSGLYEAYLAEGLSKHPLLSV.

Residue lysine 15 is part of the active site. 98–108 serves as a coordination point for ATP; sequence PTGAGLGGGSS. Residue aspartate 140 is part of the active site.

Belongs to the GHMP kinase family. IspE subfamily.

The catalysed reaction is 4-CDP-2-C-methyl-D-erythritol + ATP = 4-CDP-2-C-methyl-D-erythritol 2-phosphate + ADP + H(+). Its pathway is isoprenoid biosynthesis; isopentenyl diphosphate biosynthesis via DXP pathway; isopentenyl diphosphate from 1-deoxy-D-xylulose 5-phosphate: step 3/6. In terms of biological role, catalyzes the phosphorylation of the position 2 hydroxy group of 4-diphosphocytidyl-2C-methyl-D-erythritol. This chain is 4-diphosphocytidyl-2-C-methyl-D-erythritol kinase, found in Neisseria meningitidis serogroup C (strain 053442).